A 493-amino-acid chain; its full sequence is Acetyl-coenzyme A carboxylase carboxyl transferase subunit beta (493 aa).

Residues 231 to 493 (LWVQCENCYG…FKLHAFFPLN (263 aa)) form the CoA carboxyltransferase N-terminal domain. Positions 235, 238, 254, and 257 each coordinate Zn(2+). Residues 235 to 257 (CENCYGLNYKKFLKSKINLCEQC) form a C4-type zinc finger.

It belongs to the AccD/PCCB family. In terms of assembly, acetyl-CoA carboxylase is a heterohexamer composed of biotin carboxyl carrier protein, biotin carboxylase and 2 subunits each of ACCase subunit alpha and ACCase plastid-coded subunit beta (accD). The cofactor is Zn(2+).

It is found in the plastid stroma. The catalysed reaction is N(6)-carboxybiotinyl-L-lysyl-[protein] + acetyl-CoA = N(6)-biotinyl-L-lysyl-[protein] + malonyl-CoA. The protein operates within lipid metabolism; malonyl-CoA biosynthesis; malonyl-CoA from acetyl-CoA: step 1/1. In terms of biological role, component of the acetyl coenzyme A carboxylase (ACC) complex. Biotin carboxylase (BC) catalyzes the carboxylation of biotin on its carrier protein (BCCP) and then the CO(2) group is transferred by the transcarboxylase to acetyl-CoA to form malonyl-CoA. The sequence is that of Acetyl-coenzyme A carboxylase carboxyl transferase subunit beta from Epifagus virginiana (Beechdrops).